The sequence spans 732 residues: Sesterbrasiliatriene synthase PbSS (732 aa).

The terpene cyclase stretch occupies residues 1–342 (MDFLSGAFHY…SRYHRDDLIT (342 aa)). Mg(2+) contacts are provided by aspartate 105 and aspartate 109. Substrate is bound by residues aspartate 105, aspartate 109, 193 to 196 (RLSE), 242 to 246 (FNKEF), and 334 to 335 (RY). Positions 105–109 (DDVTD) match the DDXXD 1 motif. Residues 238–246 (DYYSFNKEF) carry the NSE/DTE motif. A prenyltransferase region spans residues 343-732 (TAGDRAMIVG…ARILLLGLGL (390 aa)). 2 disordered regions span residues 371 to 390 (KSAT…WSDS) and 398 to 420 (ACYT…HKAN). Residues 411–420 (NGTEAGHKAN) show a composition bias toward basic and acidic residues. The isopentenyl diphosphate site is built by lysine 453, arginine 456, and histidine 485. Positions 492 and 496 each coordinate Mg(2+). Positions 492-496 (DDIED) match the DDXXD 2 motif. Arginine 501 contacts dimethylallyl diphosphate. Arginine 502 provides a ligand contact to isopentenyl diphosphate. 6 residues coordinate dimethylallyl diphosphate: lysine 579, threonine 580, glutamine 615, asparagine 622, lysine 632, and lysine 642.

In the N-terminal section; belongs to the terpene synthase family. It in the C-terminal section; belongs to the FPP/GGPP synthase family. Hexamer. Mg(2+) serves as cofactor.

The enzyme catalyses isopentenyl diphosphate + (2E,6E)-farnesyl diphosphate = (2E,6E,10E)-geranylgeranyl diphosphate + diphosphate. The catalysed reaction is isopentenyl diphosphate + (2E,6E,10E)-geranylgeranyl diphosphate = (2E,6E,10E,14E)-geranylfarnesyl diphosphate + diphosphate. The protein operates within secondary metabolite biosynthesis; terpenoid biosynthesis. Its function is as follows. Bifunctional sesterterpene synthase that possesses both prenyl transferase and terpene cyclase activity, converting isopentenyl diphosphate and dimethylallyl diphosphate into geranylfarnesyl diphosphate (GFPP) and further converting GFPP into sesterbrasiliatriene. This Penicillium brasilianum protein is Sesterbrasiliatriene synthase PbSS (PbSS).